Reading from the N-terminus, the 412-residue chain is Lipoyl synthase, mitochondrial (412 aa).

The transit peptide at 1 to 28 (MASIAPSLKRAHAPLRKALTASSTIRAF) directs the protein to the mitochondrion. [4Fe-4S] cluster is bound by residues Cys124, Cys129, Cys135, Cys155, Cys159, Cys162, and Ser372. In terms of domain architecture, Radical SAM core spans 138-361 (GSDKNAATAT…NKRALDMGFL (224 aa)).

The protein belongs to the radical SAM superfamily. Lipoyl synthase family. The cofactor is [4Fe-4S] cluster.

It is found in the mitochondrion. The catalysed reaction is [[Fe-S] cluster scaffold protein carrying a second [4Fe-4S](2+) cluster] + N(6)-octanoyl-L-lysyl-[protein] + 2 oxidized [2Fe-2S]-[ferredoxin] + 2 S-adenosyl-L-methionine + 4 H(+) = [[Fe-S] cluster scaffold protein] + N(6)-[(R)-dihydrolipoyl]-L-lysyl-[protein] + 4 Fe(3+) + 2 hydrogen sulfide + 2 5'-deoxyadenosine + 2 L-methionine + 2 reduced [2Fe-2S]-[ferredoxin]. The protein operates within protein modification; protein lipoylation via endogenous pathway; protein N(6)-(lipoyl)lysine from octanoyl-[acyl-carrier-protein]: step 2/2. In terms of biological role, catalyzes the radical-mediated insertion of two sulfur atoms into the C-6 and C-8 positions of the octanoyl moiety bound to the lipoyl domains of lipoate-dependent enzymes, thereby converting the octanoylated domains into lipoylated derivatives. The protein is Lipoyl synthase, mitochondrial of Fusarium vanettenii (strain ATCC MYA-4622 / CBS 123669 / FGSC 9596 / NRRL 45880 / 77-13-4) (Fusarium solani subsp. pisi).